Reading from the N-terminus, the 345-residue chain is Methionine import ATP-binding protein MetN (345 aa).

The ABC transporter domain occupies 2–241 (IKLNNIXKIF…PKTELAQEFI (240 aa)). Residue 38 to 45 (GASGAGKS) participates in ATP binding.

This sequence belongs to the ABC transporter superfamily. Methionine importer (TC 3.A.1.24) family. As to quaternary structure, the complex is composed of two ATP-binding proteins (MetN), two transmembrane proteins (MetI) and a solute-binding protein (MetQ).

It is found in the cell inner membrane. It catalyses the reaction L-methionine(out) + ATP + H2O = L-methionine(in) + ADP + phosphate + H(+). The catalysed reaction is D-methionine(out) + ATP + H2O = D-methionine(in) + ADP + phosphate + H(+). In terms of biological role, part of the ABC transporter complex MetNIQ involved in methionine import. Responsible for energy coupling to the transport system. This Haemophilus influenzae (strain ATCC 51907 / DSM 11121 / KW20 / Rd) protein is Methionine import ATP-binding protein MetN.